A 275-amino-acid chain; its full sequence is uncharacterized protein (275 aa).

[4Fe-4S] cluster is bound by residues C97, C102, C136, and C140. A siroheme-binding site is contributed by C140.

This sequence belongs to the nitrite and sulfite reductase 4Fe-4S domain family.

This is an uncharacterized protein from Methanocaldococcus jannaschii (strain ATCC 43067 / DSM 2661 / JAL-1 / JCM 10045 / NBRC 100440) (Methanococcus jannaschii).